The sequence spans 144 residues: Prefoldin subunit alpha (144 aa).

The protein belongs to the prefoldin alpha subunit family. In terms of assembly, heterohexamer of two alpha and four beta subunits.

It localises to the cytoplasm. In terms of biological role, molecular chaperone capable of stabilizing a range of proteins. Seems to fulfill an ATP-independent, HSP70-like function in archaeal de novo protein folding. In Methanococcus maripaludis (strain C5 / ATCC BAA-1333), this protein is Prefoldin subunit alpha.